The primary structure comprises 504 residues: Cytochrome P450 6B7 (504 aa).

Cys-445 is a heme binding site.

This sequence belongs to the cytochrome P450 family. Heme serves as cofactor.

The protein resides in the endoplasmic reticulum membrane. Its subcellular location is the microsome membrane. The catalysed reaction is an organic molecule + reduced [NADPH--hemoprotein reductase] + O2 = an alcohol + oxidized [NADPH--hemoprotein reductase] + H2O + H(+). The protein is Cytochrome P450 6B7 (CYP6B7) of Helicoverpa armigera (Cotton bollworm).